The sequence spans 265 residues: 4-hydroxy-tetrahydrodipicolinate reductase (265 aa).

Residues 7 to 12, aspartate 33, 96 to 98, and 120 to 123 each bind NAD(+); these read GASGRM, GTT, and AANM. Residue histidine 153 is the Proton donor/acceptor of the active site. Histidine 154 contacts (S)-2,3,4,5-tetrahydrodipicolinate. Lysine 157 functions as the Proton donor in the catalytic mechanism. Position 163–164 (163–164) interacts with (S)-2,3,4,5-tetrahydrodipicolinate; the sequence is GT.

It belongs to the DapB family.

Its subcellular location is the cytoplasm. The catalysed reaction is (S)-2,3,4,5-tetrahydrodipicolinate + NAD(+) + H2O = (2S,4S)-4-hydroxy-2,3,4,5-tetrahydrodipicolinate + NADH + H(+). It carries out the reaction (S)-2,3,4,5-tetrahydrodipicolinate + NADP(+) + H2O = (2S,4S)-4-hydroxy-2,3,4,5-tetrahydrodipicolinate + NADPH + H(+). It functions in the pathway amino-acid biosynthesis; L-lysine biosynthesis via DAP pathway; (S)-tetrahydrodipicolinate from L-aspartate: step 4/4. In terms of biological role, catalyzes the conversion of 4-hydroxy-tetrahydrodipicolinate (HTPA) to tetrahydrodipicolinate. The chain is 4-hydroxy-tetrahydrodipicolinate reductase from Cupriavidus pinatubonensis (strain JMP 134 / LMG 1197) (Cupriavidus necator (strain JMP 134)).